Consider the following 313-residue polypeptide: MEGTWIEVRVITKSEALEPISGIFYGLDCKGVAIEDPNDILGREQGPLTWDFADINILEHKGKVAVVKGYFSEEDNIDDVIAYVKERVEELKESGLDVGEGTVEAEKMFEEDWANNWKKYYKPIKIGEKIVIKPIWEEYEPTGEEMVVELDPGMAFGTGDHETTRMCVQALDKYVKADTTVFDIGTGSGILALVASKLGAKHVLGVDLDPVAVDSAKENISFNNVDNIEVLYGNLLDVVDGKADIVVANIIAEIICILVDDVKKALNKDGIFITSGIIHERRQMVIDKLEQEGFEVMEVNKDGEWNCIVAKLK.

S-adenosyl-L-methionine-binding residues include Thr164, Gly185, Asp207, and Asn249.

The protein belongs to the methyltransferase superfamily. PrmA family.

The protein localises to the cytoplasm. The enzyme catalyses L-lysyl-[protein] + 3 S-adenosyl-L-methionine = N(6),N(6),N(6)-trimethyl-L-lysyl-[protein] + 3 S-adenosyl-L-homocysteine + 3 H(+). Methylates ribosomal protein L11. This chain is Ribosomal protein L11 methyltransferase, found in Clostridium perfringens (strain ATCC 13124 / DSM 756 / JCM 1290 / NCIMB 6125 / NCTC 8237 / Type A).